Reading from the N-terminus, the 206-residue chain is Nucleoside triphosphate pyrophosphatase (206 aa).

The active-site Proton acceptor is Asp76.

Belongs to the Maf family. A divalent metal cation serves as cofactor.

The protein resides in the cytoplasm. The enzyme catalyses a ribonucleoside 5'-triphosphate + H2O = a ribonucleoside 5'-phosphate + diphosphate + H(+). It carries out the reaction a 2'-deoxyribonucleoside 5'-triphosphate + H2O = a 2'-deoxyribonucleoside 5'-phosphate + diphosphate + H(+). In terms of biological role, nucleoside triphosphate pyrophosphatase. May have a dual role in cell division arrest and in preventing the incorporation of modified nucleotides into cellular nucleic acids. This chain is Nucleoside triphosphate pyrophosphatase, found in Streptomyces coelicolor (strain ATCC BAA-471 / A3(2) / M145).